The following is a 156-amino-acid chain: ATP synthase subunit b (156 aa).

The chain crosses the membrane as a helical span at residues 5 to 27 (ITLIGQMITFAIFIGFTMKFVWP).

It belongs to the ATPase B chain family. As to quaternary structure, F-type ATPases have 2 components, F(1) - the catalytic core - and F(0) - the membrane proton channel. F(1) has five subunits: alpha(3), beta(3), gamma(1), delta(1), epsilon(1). F(0) has three main subunits: a(1), b(2) and c(10-14). The alpha and beta chains form an alternating ring which encloses part of the gamma chain. F(1) is attached to F(0) by a central stalk formed by the gamma and epsilon chains, while a peripheral stalk is formed by the delta and b chains.

Its subcellular location is the cell inner membrane. Functionally, f(1)F(0) ATP synthase produces ATP from ADP in the presence of a proton or sodium gradient. F-type ATPases consist of two structural domains, F(1) containing the extramembraneous catalytic core and F(0) containing the membrane proton channel, linked together by a central stalk and a peripheral stalk. During catalysis, ATP synthesis in the catalytic domain of F(1) is coupled via a rotary mechanism of the central stalk subunits to proton translocation. In terms of biological role, component of the F(0) channel, it forms part of the peripheral stalk, linking F(1) to F(0). In Francisella tularensis subsp. holarctica (strain OSU18), this protein is ATP synthase subunit b.